A 494-amino-acid chain; its full sequence is Ectonucleoside triphosphate diphosphohydrolase 8 (494 aa).

The Cytoplasmic segment spans residues M1–R8. The helical transmembrane segment at V9–L29 threads the bilayer. Residues V30–S465 are Extracellular-facing. The cysteines at positions 78 and 102 are disulfide-linked. E168 (proton acceptor) is an active-site residue. Cysteines 245 and 291 form a disulfide. 2 N-linked (GlcNAc...) asparagine glycosylation sites follow: N299 and N303. C328 and C334 are joined by a disulfide. N362 carries N-linked (GlcNAc...) asparagine glycosylation. Cysteines 380 and 402 form a disulfide. A helical membrane pass occupies residues I466–A486. Residues V487–D494 are Cytoplasmic-facing.

It belongs to the GDA1/CD39 NTPase family. Requires Ca(2+) as cofactor. It depends on Mg(2+) as a cofactor. In terms of processing, N-glycosylated. In terms of tissue distribution, present in liver, and at lower level in jejunum and kidney. Limited to the canalicular domain of hepatocytes (at protein level).

It is found in the cell membrane. The enzyme catalyses a ribonucleoside 5'-triphosphate + 2 H2O = a ribonucleoside 5'-phosphate + 2 phosphate + 2 H(+). Functionally, canalicular ectonucleoside NTPDase responsible for the main hepatic NTPDase activity. Ectonucleoside NTPDases catalyze the hydrolysis of gamma- and beta-phosphate residues of nucleotides, playing a central role in concentration of extracellular nucleotides. Has activity toward ATP, ADP, UTP and UDP, but not toward AMP. The protein is Ectonucleoside triphosphate diphosphohydrolase 8 (Entpd8) of Rattus norvegicus (Rat).